Consider the following 600-residue polypeptide: Aspartate--tRNA(Asp/Asn) ligase (600 aa).

Glu181 is a binding site for L-aspartate. The tract at residues 205–208 (QQYK) is aspartate. Position 227 (Arg227) interacts with L-aspartate. Residues 227-229 (RDE) and Gln236 each bind ATP. L-aspartate is bound at residue His455. Glu490 lines the ATP pocket. Position 497 (Arg497) interacts with L-aspartate. 542–545 (GLDR) provides a ligand contact to ATP.

The protein belongs to the class-II aminoacyl-tRNA synthetase family. Type 1 subfamily. As to quaternary structure, homodimer.

It localises to the cytoplasm. It catalyses the reaction tRNA(Asx) + L-aspartate + ATP = L-aspartyl-tRNA(Asx) + AMP + diphosphate. Aspartyl-tRNA synthetase with relaxed tRNA specificity since it is able to aspartylate not only its cognate tRNA(Asp) but also tRNA(Asn). Reaction proceeds in two steps: L-aspartate is first activated by ATP to form Asp-AMP and then transferred to the acceptor end of tRNA(Asp/Asn). The sequence is that of Aspartate--tRNA(Asp/Asn) ligase from Methylacidiphilum infernorum (isolate V4) (Methylokorus infernorum (strain V4)).